Here is an 886-residue protein sequence, read N- to C-terminus: MAELPQSRINERNITSEMRESFLDYAMSVIVARALPDVRDGLKPVHRRILYGLNEQGMTPDKSYKKSARIVGDVMGKYHPHGDLSIYEAMVRMAQDFSYRYPLVDGQGNFGSMDGDGAAAMRYTEARMTKITLELLRDINKDTIDFIDNYDGNEREPSVLPARFPNLLANGASGIAVGMATNIPPHNLTELINGVLSLSKNPDISIAELMEDIEGPDFPTAGLILGKSGIRRAYETGRGSIQMRSRAVIEERGGGRQRIVVTEIPFQVNKARMIEKIAELVRDKKIDGITDLRDETSLRTGVRVVIDVRKDANASVILNNLYKQTPLQTSFGVNMIALVNGRPKLINLKEALVHYLEHQKTVVRRRTQYNLRKAKDRAHILEGLRIALDHIDEIISTIRESETDKVAMESLQQRFKLSEKQAQAILDMRLRRLTGLERDKIEAEYNELLNYISELEAILADEEVLLQLVRDELTEIRDRFGDDRRTEIQLGGFEDLEDEDLIPEEQIVITLSHNNYIKRLPVSTYRAQNRGGRGVQGMNTLEEDFVSQLVTLSTHDHVLFFTNKGRVYKLKGYEVPELSRQSKGIPVVNAIELENDEIISTMIAVKDLESEDNFLVFATKRGVVKRSALSNFSRINRNGKIAISFREDDELIAVRLTSGQEDILIGTSHASLIRFPESTLRPLGRTATGVKGITLREGDEVVGLDVAHANSVDEVLVVTENGYGKRTPVNDYRLSNRGGKGIKTATITERNGNVVCITTVTGEEDLMIVTNAGVIIRLDVADISQNGRAAQGVRLIRLGDDQFVSTVAKVKEDADEENEDEQSTVSEDGTEQQREAVVNDETPGNAIHTEVIDSEVNDEDGRIEVRQDFMDRVEEDIQQSSDDDEE.

The 467-residue stretch at 35-501 folds into the Topo IIA-type catalytic domain; that stretch reads LPDVRDGLKP…GFEDLEDEDL (467 aa). The active-site O-(5'-phospho-DNA)-tyrosine intermediate is Y123. Residues 528–534 carry the GyrA-box motif; the sequence is QNRGGRG. The disordered stretch occupies residues 810 to 860; that stretch reads VKEDADEENEDEQSTVSEDGTEQQREAVVNDETPGNAIHTEVIDSEVNDED. Residues 813 to 822 are compositionally biased toward acidic residues; it reads DADEENEDEQ.

This sequence belongs to the type II topoisomerase GyrA/ParC subunit family. Heterotetramer, composed of two GyrA and two GyrB chains. In the heterotetramer, GyrA contains the active site tyrosine that forms a transient covalent intermediate with DNA, while GyrB binds cofactors and catalyzes ATP hydrolysis.

It localises to the cytoplasm. The catalysed reaction is ATP-dependent breakage, passage and rejoining of double-stranded DNA.. Functionally, a type II topoisomerase that negatively supercoils closed circular double-stranded (ds) DNA in an ATP-dependent manner to modulate DNA topology and maintain chromosomes in an underwound state. Negative supercoiling favors strand separation, and DNA replication, transcription, recombination and repair, all of which involve strand separation. Also able to catalyze the interconversion of other topological isomers of dsDNA rings, including catenanes and knotted rings. Type II topoisomerases break and join 2 DNA strands simultaneously in an ATP-dependent manner. The chain is DNA gyrase subunit A from Staphylococcus aureus (strain MRSA252).